A 320-amino-acid chain; its full sequence is tRNA dimethylallyltransferase (320 aa).

14–21 lines the ATP pocket; sequence GPTASGKT. 16 to 21 lines the substrate pocket; the sequence is TASGKT. Interaction with substrate tRNA stretches follow at residues 39 to 42 and 163 to 167; these read DSAL and QRLQR.

It belongs to the IPP transferase family. Monomer. Mg(2+) is required as a cofactor.

The enzyme catalyses adenosine(37) in tRNA + dimethylallyl diphosphate = N(6)-dimethylallyladenosine(37) in tRNA + diphosphate. Its function is as follows. Catalyzes the transfer of a dimethylallyl group onto the adenine at position 37 in tRNAs that read codons beginning with uridine, leading to the formation of N6-(dimethylallyl)adenosine (i(6)A). The polypeptide is tRNA dimethylallyltransferase (Thioalkalivibrio sulfidiphilus (strain HL-EbGR7)).